The chain runs to 1802 residues: MMVFQSFILGNLVSLCMKIINSVVVVGLYYGFLTTFSIGPSYLFLLRARVMDEGEEGTEKKVSATTGFIAGQLMMFISIYYAPLHLALGRPHTITVLALPYLLFHFFWNNHKHFFDYGSTTRNEMRNLRIQCVFLNNLIFQLFNHFILPSSMLARLVNIYMFRCNNKMLFVTSSFVGWLIGHILFMKWVGLVLVWIQQNNSIRSNVLIRSNKYKFLVSELRNSMARIFSILLFITCVYYLGRIPSPIFTKKLKGTSETGGTKQDQEVSTEEAPFPSLFSEEREDLDKIDEMEEIRVNGKDKINKDDEFHVRTYYNYKTVSENLDGNKENSNLEFFKIKKKEDHFLWFEKPFVTLVFDYKRWNRPNRYIKNEKIQNTVRNEMSQYFFYTCQSDGKERISFTYPPTLSTFFEMIQKNIPSFTREKTPSDQVSTYWRLINEEKKENLKKEFLNRIEALDKEWSVENILEKTTRFCHNETKKEYLPKIYDPFLHGVSRGRIKKLPQFQIITETYIKKNIEGSWINKIHGILMKMNSNKFEQTIEKFNIESLSIEKKLSFFSESQEEKINSEEEIKIFKFLFDVVITDSNDQTLIKNFMDFHEINKKVPRWSYKLISELEELEGENEENVTMEPGIRSRKAKRVVVFTDTEPHNEVYTKLKDLKDNQNSDQNDEMALIRYSHQSDFRRELIKGSMRSQRRKTVIWQFFQAKVHSPLFFDRIDKLFYFSFDIWGLKKEILRNFMWKNKKNQKIDKKDEEQSKIEEKRRIEISETWDSFLFAQIIRGYLLVTQSILRKYIILPLLIIIKNSVRMLLFQFPEWSEDLKDWKREMHVKCTYNGVQLSETEFPKNWLTDGIQIKILFPFYLKPWHKSKFQSFQKARLKKIKDKGEQNDFCFLTVWGMETELPFGSAQKKPSFFEPISKQLTKRIKKFKTKSFLVLRIFKERATIFLKVAKEIKNWFLKNFLFIKGKIKDLSKRNLISLFGPREIYELNETQKDSIMSNQMIHELSVQNKSMEWTNSSLSENKIKNLINRIKTISNQIEEISKEKQNLTNSCNKLRYDSKKMESSKKIWQTFKRKNTRLIRKSIFFVKFCIEQLSIAIFLGIINIPRITTQLFFESTKTILDKYIYKTEENGEKINNKKTTIYFISTIKNLISNSNKKKISYNLCSLSQAYVFYKISQIKVSHVSKFSKLKAVLEYNRCITSFFLKNQIKDFFQEQGIFHYKLKDKTLLNSEVNHWKNWLRSNYQYNLPQIAWARLGTQKWKKKINQDYLVLNPSLTNEDSYEKKKFDNYQKKSFFEADSLLNPKHNLKKDSIYNLFCYKSINSTEKIFDMSIGIARDNCLVSCFLEKYNIRGIGEIRHRKYLDWRILNFWVTKKVNSEPWVDTKNKKKYINTKVQNYQRIDKITKTGLANKKRNFFDWMGMNEEILNHRRKNFEFFFFPEFFLFSSTYKMKPWVIPIKLLLLNFNENINVNKKITGKKKGFIPSNEKKSLRFFNLNKEEKESAGQVELESDKEKKINPESALSNHEKNIEENYEESTIKKRKNKKQYKSNTEAELDLFLTRYSRFQLRWNSFFNQKILNNVKVYCLLVRLKNPNEIAISSIERGEMSLDILMIEKNFTFAKLMKKGILIIEPVRLSVQNDGQRIIYRTIGISLVHKNKHKINKRYKKKSYIEKKTIEKSITKYQNKTVNRKKNHYDFFVPENILSPKRRREFRILICFNLKKKNARDRNSRFNKNIQNLTTVLDTKKDLAKDKNNLIKFKSFLWPNFRLEDLACMNRYWFNTTNGNHFSMIRIHMYTRFPIH.

Helical transmembrane passes span 19-39 (IINS…FSIG), 68-88 (FIAG…HLAL), 91-111 (PHTI…WNNH), 133-153 (VFLN…SSML), 176-196 (VGWL…LVWI), and 227-247 (IFSI…PSPI).

The protein belongs to the TIC214 family. In terms of assembly, part of the Tic complex.

The protein resides in the plastid. Its subcellular location is the chloroplast inner membrane. Involved in protein precursor import into chloroplasts. May be part of an intermediate translocation complex acting as a protein-conducting channel at the inner envelope. This chain is Protein TIC 214, found in Nasturtium officinale (Watercress).